The following is a 286-amino-acid chain: 5-amino-6-(5-phospho-D-ribitylamino)uracil phosphatase YwtE (286 aa).

Asp-7 serves as the catalytic Nucleophile. Residue Asp-7 coordinates Mg(2+). Leu-8 is a phosphate binding site. Position 9 (Asp-9) interacts with Mg(2+). Residues 41-42 and Lys-210 each bind phosphate; that span reads TG. The Mg(2+) site is built by Asp-233 and Ser-234. Asn-236 provides a ligand contact to phosphate.

This sequence belongs to the HAD-like hydrolase superfamily. Cof family. The cofactor is Mg(2+).

The enzyme catalyses 5-amino-6-(5-phospho-D-ribitylamino)uracil + H2O = 5-amino-6-(D-ribitylamino)uracil + phosphate. It participates in cofactor biosynthesis; riboflavin biosynthesis; 5-amino-6-(D-ribitylamino)uracil from GTP: step 4/4. In terms of biological role, catalyzes the dephosphorylation of the riboflavin precursor 5-amino-6-(5-phospho-D-ribitylamino)uracil and of flavin mononucleotide (FMN) in vitro. Also catalyzes the dephosphorylation of phosphorylated 5-6 carbon sugars and monophosphate nucleotides (NMP) in vitro. The polypeptide is 5-amino-6-(5-phospho-D-ribitylamino)uracil phosphatase YwtE (ywtE) (Bacillus subtilis (strain 168)).